The chain runs to 272 residues: ATP synthase subunit delta (272 aa).

It belongs to the ATPase delta chain family. In terms of assembly, F-type ATPases have 2 components, F(1) - the catalytic core - and F(0) - the membrane proton channel. F(1) has five subunits: alpha(3), beta(3), gamma(1), delta(1), epsilon(1). F(0) has three main subunits: a(1), b(2) and c(10-14). The alpha and beta chains form an alternating ring which encloses part of the gamma chain. F(1) is attached to F(0) by a central stalk formed by the gamma and epsilon chains, while a peripheral stalk is formed by the delta and b chains.

It localises to the cell membrane. F(1)F(0) ATP synthase produces ATP from ADP in the presence of a proton or sodium gradient. F-type ATPases consist of two structural domains, F(1) containing the extramembraneous catalytic core and F(0) containing the membrane proton channel, linked together by a central stalk and a peripheral stalk. During catalysis, ATP synthesis in the catalytic domain of F(1) is coupled via a rotary mechanism of the central stalk subunits to proton translocation. Functionally, this protein is part of the stalk that links CF(0) to CF(1). It either transmits conformational changes from CF(0) to CF(1) or is implicated in proton conduction. This Corynebacterium jeikeium (strain K411) protein is ATP synthase subunit delta.